Here is a 252-residue protein sequence, read N- to C-terminus: Chlorophyll a-b binding protein P4, chloroplastic (252 aa).

Residue Trp-56 coordinates chlorophyll b. Residues Phe-76 and Glu-95 each coordinate chlorophyll a. Chlorophyll b is bound at residue Arg-100. A run of 2 helical transmembrane segments spans residues Trp-101–Ile-121 and Tyr-134–Ile-154. Chlorophyll b-binding residues include Ser-137, Val-143, Glu-153, and Arg-156. The chlorophyll a site is built by Lys-203, Glu-204, Asn-207, Arg-209, Gln-221, and His-236.

It belongs to the light-harvesting chlorophyll a/b-binding (LHC) protein family. As to quaternary structure, the LHC complex consists of chlorophyll a-b binding proteins. It depends on Binds at least 14 chlorophylls (8 Chl-a and 6 Chl-b) and carotenoids such as lutein and neoxanthin. as a cofactor. Photoregulated by reversible phosphorylation of its threonine residues.

The protein resides in the plastid. It is found in the chloroplast thylakoid membrane. Its function is as follows. The light-harvesting complex (LHC) functions as a light receptor, it captures and delivers excitation energy to photosystems with which it is closely associated. In terms of biological role, may channel protons produced in the catalytic Mn center of water oxidation into the thylakoid lumen. This chain is Chlorophyll a-b binding protein P4, chloroplastic, found in Pisum sativum (Garden pea).